A 333-amino-acid chain; its full sequence is PDZ domain-containing protein GIPC1 (333 aa).

Positions 1 to 11 are enriched in basic residues; it reads MPLGLGRRKKA. The tract at residues 1 to 55 is disordered; sequence MPLGLGRRKKAPPLVENEEAEPSRSGLGVGEPGPLGGSGAGESQMGLPPPPASLR. Gly residues predominate over residues 27 to 40; sequence LGVGEPGPLGGSGA. Serine 68 carries the phosphoserine modification. In terms of domain architecture, PDZ spans 133–213; the sequence is EVEVFKSEDA…GRTFTLKLTE (81 aa). A disordered region spans residues 221-244; it reads ISQRSSGGHPGSGPQLGTGRGTLR. Residues serine 222, serine 225, and serine 232 each carry the phosphoserine modification. Over residues 228 to 240 the composition is skewed to gly residues; the sequence is GHPGSGPQLGTGR. Threonine 242 is modified (phosphothreonine). Serine 247 carries the phosphoserine modification.

Belongs to the GIPC family. In terms of assembly, interacts with SDC4/syndecan-4 and SEMA4C/semaphorin-4C. Interacts with RGS19 (C-terminus), GLUT1 (C-terminus), ACTN1, KIF1B, MYO6 and PLEKHG5. As to expression, widely expressed.

The protein localises to the cytoplasm. The protein resides in the membrane. Its function is as follows. May be involved in G protein-linked signaling. The chain is PDZ domain-containing protein GIPC1 (Gipc1) from Rattus norvegicus (Rat).